The chain runs to 62 residues: Beta-defensin 133 (62 aa).

A signal peptide spans 1 to 21 (MKIHIFLFVLFFFLVPIATRG). 2 disulfide bridges follow: cysteine 32/cysteine 60 and cysteine 39/cysteine 53.

The protein belongs to the beta-defensin family.

The protein resides in the secreted. Has antibacterial activity. In Pan troglodytes (Chimpanzee), this protein is Beta-defensin 133 (DEFB133).